Reading from the N-terminus, the 584-residue chain is High-affinity choline transporter 1 (584 aa).

Residues 1 to 6 (MTVHID) lie on the Extracellular side of the membrane. Residues 7–27 (GIVAIVLFYLLILFVGLWAAW) form a helical membrane-spanning segment. The Cytoplasmic segment spans residues 28 to 50 (KSKNTSMEGAMDRSEAIMIGGRD). The chain crosses the membrane as a helical span at residues 51 to 71 (IGLLVGGFTMTATWVGGGYIN). Topologically, residues 72-83 (GTAEAVYVPGYG) are extracellular. Residues 84–104 (LAWAQAPFGYALSLVIGGLFF) form a helical membrane-spanning segment. The Cytoplasmic portion of the chain corresponds to 105–127 (AKPMRSRGYVTMLDPFQQMYGKR). The helical transmembrane segment at 128–148 (MGGLLFIPALLGEIFWSAAIL) threads the bilayer. Topologically, residues 149-166 (SALGATLSVIVDININVS) are extracellular. The helical transmembrane segment at 167–187 (VVVSAVIAVLYTLVGGLYSVA) threads the bilayer. Residues 188–193 (YTDVVQ) are Cytoplasmic-facing. The chain crosses the membrane as a helical span at residues 194–214 (LFCIFLGLWISIPFALLNPAV). Residues 215–239 (TDIIVTANQEVYQEPWVGNIQSKDS) lie on the Extracellular side of the membrane. A helical membrane pass occupies residues 240–260 (LIWIDNFLLLMLGGIPWQVYF). Residues 261–276 (QRVLSASSATYAQVLS) lie on the Cytoplasmic side of the membrane. A helical membrane pass occupies residues 277 to 297 (FLAAFGCVLMAIPSVLIGAIG). Residues 298 to 319 (TSTDWNQTSYGLPGPIGKNETD) lie on the Extracellular side of the membrane. N-linked (GlcNAc...) asparagine glycosylation occurs at N303. The chain crosses the membrane as a helical span at residues 320 to 340 (MILPIVLQHLCPPYISFFGLG). Topologically, residues 341 to 378 (AVSAAVMSSADSSILSASSMFARNIYHLAFRQEASDKE) are cytoplasmic. The chain crosses the membrane as a helical span at residues 379 to 399 (IVWVMRITIFLFGGAATSMAL). Residues 400–408 (LAQSIYGLW) lie on the Extracellular side of the membrane. A helical membrane pass occupies residues 409-429 (YLSSDLVYVIIFPQLISVLFV). Topologically, residues 430–437 (KGTNTYGS) are cytoplasmic. Residues 438–458 (IAGYIIGFLLRISGGEPYLHM) form a helical membrane-spanning segment. Topologically, residues 459–487 (QPFIYYPGCYLDHSFGDDPVYVQRFPFKT) are extracellular. A helical transmembrane segment spans residues 488-508 (MAMLFSFLGNTGVSYLVKYLF). At 509 to 584 (VSGILPPKLD…NPELSKSGND (76 aa)) the chain is on the cytoplasmic side.

This sequence belongs to the sodium:solute symporter (SSF) (TC 2.A.21) family. Phosphorylated. As to expression, specific for cholinergic neurons.

The protein resides in the membrane. Its function is as follows. Imports choline from the extracellular space to the neuron with high affinity. Rate-limiting step in acetylcholine synthesis. Sodium ion and chloride ion dependent. The polypeptide is High-affinity choline transporter 1 (CHT1) (Torpedo marmorata (Marbled electric ray)).